A 332-amino-acid chain; its full sequence is T-cell surface glycoprotein CD1c1 (332 aa).

The signal sequence occupies residues 1-17; that stretch reads MLFLHFLFLDVVLGGSI. Residues 18–300 lie on the Extracellular side of the membrane; sequence TENVVQENIS…IILYWGHGLS (283 aa). Residues N25, N38, N75, and N146 are each glycosylated (N-linked (GlcNAc...) asparagine). 2 cysteine pairs are disulfide-bonded: C120–C184 and C224–C279. Residues 205–292 enclose the Ig-like domain; sequence PEVWLSSSPN…HSSLRDQDII (88 aa). A helical membrane pass occupies residues 301–321; the sequence is VILITFAVIVPLVLLIVLMLL. Residues 322–332 lie on the Cytoplasmic side of the membrane; sequence YKKRCTYQGIQ.

As to quaternary structure, heterodimer with B2M (beta-2-microglobulin).

Its subcellular location is the cell membrane. It localises to the endosome membrane. Its function is as follows. Antigen-presenting protein that binds self and non-self lipid and glycolipid antigens and presents them to T-cell receptors on natural killer T-cells. This Cavia porcellus (Guinea pig) protein is T-cell surface glycoprotein CD1c1 (CD1C1).